The sequence spans 642 residues: MRSLTTKTSSALLTVWGLLSVSLMPSVGQADKTAGDYFVHSLPGAPAGPLLKMHAGHIEVTPEHHGNIFFWHFQNRHIANKQRTVIWLNGGPGCSSEDGALMEIGPYRVKDGSNGPKLEYNPGSWDEFANVMFVDNPVGTGFSFVDSDSYIHDLPEMADQFVQFLEKWFALFPEYEHDDLYLAGESYAGQHIPYITKAILERNKKPDAKHKWPVKGMLIGNGWISPVEQYMSYLPFAYEKGLVKKDSEKAKKLESQQAICTKMLNENGGRDKVDNSQCEQILQEILSTTQSKGSDGNMQCYNMYDVRLKDSYPSCGMNWPPDLVNVTPYLRRSDVVAALHISPEKRTGWTECNGAVGSAFRAANSKPSIQILPELLAEVPTILFSGAEDLICNHIGTEELISNMEWNGGKGFELGSGTWAPRRDWEFEGEPAGFWQEARNLTYVLFYNSSHMVPFDYARRTRDMLDRFMKVDIASIGGAPTDSRIDGEKGLETSVGGHPNSTAAAEAEEERLEAAKWNAYYKSGEIVLVIVVIAASAWGYYIWRERRQRAGYAGIFGGDTPMALAGARSGSRGAAGLEDFRNKRNARDVEAADFDESELDELHVRSPTDDMDRDRYSVGSASDDESIGKRNGNGKGKEKSYS.

A signal peptide spans 1-30 (MRSLTTKTSSALLTVWGLLSVSLMPSVGQA). Residues 31 to 522 (DKTAGDYFVH…EAAKWNAYYK (492 aa)) lie on the Lumenal side of the membrane. Active-site residues include Ser186 and Asp389. Residues Asn440 and Asn448 are each glycosylated (N-linked (GlcNAc...) asparagine). The active site involves His451. Residues 480-505 (PTDSRIDGEKGLETSVGGHPNSTAAA) form a disordered region. A glycan (N-linked (GlcNAc...) asparagine) is linked at Asn500. A helical transmembrane segment spans residues 523–543 (SGEIVLVIVVIAASAWGYYIW). Topologically, residues 544-642 (RERRQRAGYA…NGKGKEKSYS (99 aa)) are cytoplasmic. The disordered stretch occupies residues 598 to 642 (ELDELHVRSPTDDMDRDRYSVGSASDDESIGKRNGNGKGKEKSYS). A compositionally biased stretch (basic and acidic residues) spans 600–616 (DELHVRSPTDDMDRDRY).

The protein belongs to the peptidase S10 family.

It is found in the golgi apparatus. It localises to the trans-Golgi network membrane. It catalyses the reaction Preferential release of a C-terminal arginine or lysine residue.. Functionally, protease with a carboxypeptidase B-like function involved in the C-terminal processing of the lysine and arginine residues from protein precursors. Promotes cell fusion and is involved in the programmed cell death. This Sclerotinia sclerotiorum (strain ATCC 18683 / 1980 / Ss-1) (White mold) protein is Pheromone-processing carboxypeptidase kex1 (kex1).